The chain runs to 234 residues: Proteasome subunit alpha type-2 (234 aa).

An N-acetylalanine modification is found at Ala2. The residue at position 121 (Tyr121) is a Phosphotyrosine.

It belongs to the peptidase T1A family. As to quaternary structure, the 26S proteasome consists of a 20S proteasome core and two 19S regulatory subunits. The 20S proteasome core is a barrel-shaped complex made of 28 subunits that are arranged in four stacked rings. The two outer rings are each formed by seven alpha subunits, and the two inner rings are formed by seven beta subunits. The proteolytic activity is exerted by three beta-subunits PSMB5, PSMB6 and PSMB7.

It is found in the cytoplasm. It localises to the nucleus. In terms of biological role, component of the 20S core proteasome complex involved in the proteolytic degradation of most intracellular proteins. This complex plays numerous essential roles within the cell by associating with different regulatory particles. Associated with two 19S regulatory particles, forms the 26S proteasome and thus participates in the ATP-dependent degradation of ubiquitinated proteins. The 26S proteasome plays a key role in the maintenance of protein homeostasis by removing misfolded or damaged proteins that could impair cellular functions, and by removing proteins whose functions are no longer required. Associated with the PA200 or PA28, the 20S proteasome mediates ubiquitin-independent protein degradation. This type of proteolysis is required in several pathways including spermatogenesis (20S-PA200 complex) or generation of a subset of MHC class I-presented antigenic peptides (20S-PA28 complex). The chain is Proteasome subunit alpha type-2 (psma2) from Xenopus laevis (African clawed frog).